Reading from the N-terminus, the 160-residue chain is UPF0479 membrane protein YER190C-B (160 aa).

2 consecutive transmembrane segments (helical) span residues 39-59 (IVFC…KVLQ) and 136-156 (VPMI…ISQH).

This sequence belongs to the UPF0479 family.

The protein localises to the membrane. In Saccharomyces cerevisiae (strain ATCC 204508 / S288c) (Baker's yeast), this protein is UPF0479 membrane protein YER190C-B.